A 504-amino-acid chain; its full sequence is Glutamate--tRNA ligase (504 aa).

The short motif at 10–20 (PSPTGDPHVGT) is the 'HIGH' region element. The short motif at 251-255 (KLSKR) is the 'KMSKS' region element. Lysine 254 serves as a coordination point for ATP.

Belongs to the class-I aminoacyl-tRNA synthetase family. Glutamate--tRNA ligase type 1 subfamily. As to quaternary structure, monomer.

Its subcellular location is the cytoplasm. It carries out the reaction tRNA(Glu) + L-glutamate + ATP = L-glutamyl-tRNA(Glu) + AMP + diphosphate. In terms of biological role, catalyzes the attachment of glutamate to tRNA(Glu) in a two-step reaction: glutamate is first activated by ATP to form Glu-AMP and then transferred to the acceptor end of tRNA(Glu). The sequence is that of Glutamate--tRNA ligase from Cellvibrio japonicus (strain Ueda107) (Pseudomonas fluorescens subsp. cellulosa).